The chain runs to 462 residues: Hyaluronidase-1 (462 aa).

The first 52 residues, 1 to 52 (MLGLTQHAQKVWRMKPFSPEVSPGSSPATAGHLLRISTLFLTLLELAQVCRG), serve as a signal peptide directing secretion. 2 disulfides stabilise this stretch: Cys71-Cys361 and Cys235-Cys249. Asn98 and Asn127 each carry an N-linked (GlcNAc...) asparagine glycan. Glu159 functions as the Proton donor in the catalytic mechanism. N-linked (GlcNAc...) asparagine glycans are attached at residues Asn244, Asn265, and Asn378. Cystine bridges form between Cys386–Cys397, Cys391–Cys446, and Cys448–Cys457. Residues 446-457 (CRCYRGWRGKWC) form the EGF-like domain.

The protein belongs to the glycosyl hydrolase 56 family. Highly expressed in liver, kidney, lung and skin.

The protein localises to the secreted. The protein resides in the lysosome. The enzyme catalyses Random hydrolysis of (1-&gt;4)-linkages between N-acetyl-beta-D-glucosamine and D-glucuronate residues in hyaluronate.. Functionally, may have a role in promoting tumor progression. May block the TGFB1-enhanced cell growth. The sequence is that of Hyaluronidase-1 (Hyal1) from Mus musculus (Mouse).